The sequence spans 291 residues: Citrate lyase subunit beta (291 aa).

Residues Arg-66 and Glu-129 each coordinate substrate. Mg(2+) contacts are provided by Glu-129 and Asp-156.

It belongs to the HpcH/HpaI aldolase family. Citrate lyase beta subunit subfamily. As to quaternary structure, oligomer with a subunit composition of (alpha,beta,gamma)6. It depends on Mg(2+) as a cofactor.

It localises to the cytoplasm. The enzyme catalyses citrate = oxaloacetate + acetate. It catalyses the reaction (3S)-citryl-CoA = oxaloacetate + acetyl-CoA. Its function is as follows. Represents a citryl-ACP lyase. The protein is Citrate lyase subunit beta (citE) of Haemophilus influenzae (strain ATCC 51907 / DSM 11121 / KW20 / Rd).